The sequence spans 976 residues: Synaptonemal complex protein 1 (976 aa).

The Mediates head to head self-assembly of N-terminal ends signature appears at 101–111 (GLSRVYSKLYK). Residues 117–120 (KKWK) carry the Nuclear localization signal motif. An interaction with SYCE3 region spans residues 206–362 (ETRQVYMDLN…CQLTEEKETQ (157 aa)). Coiled coils occupy residues 211 to 316 (YMDL…SIEK), 391 to 439 (LRTE…LKKV), 499 to 685 (VKDL…VEKA), and 739 to 798 (EQEQ…KTQT). Residues 676-770 (ENLLEEVEKA…LSVKKQLEIE (95 aa)) form a required for pH-induced assembly of C-terminal ends into antiparallel tetramers region. The short motif at 679–682 (LEEV) is the Nuclear localization signal element. The tract at residues 784-976 (NTATLKEKKD…KLKEAEKLFV (193 aa)) is DNA-binding. Residues 880-883 (KKRK) carry the Nuclear localization signal motif.

In terms of assembly, structural component of synaptonemal complexes. Homotetramer that consists of an N-terminal four-helical bundle that bifurcates into two elongated C-terminal dimeric coiled coils. This tetrameric building block potentially self-assembles into a supramolecular zipper-like lattice to mediate meiotic chromosome synapsis. Self-assembly is likely initiated by local proton density at chromosome axis, which is predicted to trigger antiparallel back to back assembly of adjacent C-terminal ends into tetrameric structures that anchor to chromosomal DNA. Then the N-terminal ends are predicted to undergo cooperative antiparallel head to head assembly at the midline of synaptonemal complexes central element to form a zipper-like lattice between properly aligned homologous chromosomes. The nascent synapsis generated by SYCP1 is stabilized through interaction with central element proteins SYCE1 and SYCE2. Interacts (via tetrameric core) with SYCE3; the interaction remodels SYCP1 homotetramers to 2:1 heterotrimers with SYCE3. SYCP1/SYCE3 heterotrimers form lattice assemblies as part of the mature synaptonemal complex via both lateral and head-to-head interactions. Forms a complex with EWSR1, PRDM9, SYCP3 and REC8; complex formation is dependent of phosphorylated form of REC8 and requires PRDM9 bound to hotspot DNA; EWSR1 joins PRDM9 with the chromosomal axis through REC8. Interacts with SPO16. In terms of tissue distribution, testis.

The protein localises to the nucleus. It is found in the chromosome. Its subcellular location is the centromere. Functionally, major component of the transverse filaments of synaptonemal complexes, formed between homologous chromosomes during meiotic prophase. Required for normal assembly of the central element of the synaptonemal complexes. Required for normal centromere pairing during meiosis. Required for normal meiotic chromosome synapsis during oocyte and spermatocyte development and for normal male and female fertility. This is Synaptonemal complex protein 1 from Homo sapiens (Human).